We begin with the raw amino-acid sequence, 457 residues long: Probable mitochondrial-processing peptidase subunit beta (457 aa).

Residue His-66 coordinates Zn(2+). Glu-69 acts as the Proton acceptor in catalysis. Residues His-70 and Glu-146 each coordinate Zn(2+).

The protein belongs to the peptidase M16 family. In terms of assembly, heterodimer of mas2 (alpha) and qcr1 (beta) subunits, forming the mitochondrial processing protease (MPP) in which mas2 is involved in substrate recognition and binding and qcr1 is the catalytic subunit. The cofactor is Zn(2+).

The protein localises to the mitochondrion matrix. The catalysed reaction is Release of N-terminal transit peptides from precursor proteins imported into the mitochondrion, typically with Arg in position P2.. Binding to mas2 is required for catalytic activity. Catalytic subunit of the essential mitochondrial processing protease (MPP), which cleaves the mitochondrial sequence off newly imported precursors proteins. Preferentially, cleaves after an arginine at position P2. The polypeptide is Probable mitochondrial-processing peptidase subunit beta (qcr1) (Schizosaccharomyces pombe (strain 972 / ATCC 24843) (Fission yeast)).